Here is a 130-residue protein sequence, read N- to C-terminus: Small ribosomal subunit protein uS9 (130 aa).

Positions 108–130 (SREVERKKVGLRKARKRPQYSKR) are disordered. Over residues 116-130 (VGLRKARKRPQYSKR) the composition is skewed to basic residues.

Belongs to the universal ribosomal protein uS9 family.

This chain is Small ribosomal subunit protein uS9, found in Cellvibrio japonicus (strain Ueda107) (Pseudomonas fluorescens subsp. cellulosa).